A 687-amino-acid chain; its full sequence is Fimbrin-5 (687 aa).

The EF-hand domain maps to 7–74 (VLVSDPWLQS…KSVLDKSYPN (68 aa)). Calponin-homology (CH) domains lie at 122-239 (ESEK…KIQM), 267-370 (LAPE…QHRN), 392-498 (SREE…RYTM), and 513-621 (EITD…YWSL). Actin-binding stretches follow at residues 122–370 (ESEK…QHRN) and 392–621 (SREE…YWSL). Residues 628-687 (ESTVSEDATDDGDANSVAGEISNLSIDGASESSPTVQDQELLTKADNDEDEVDGENNKDA) form a disordered region. Polar residues predominate over residues 649 to 667 (SNLSIDGASESSPTVQDQE).

As to quaternary structure, interacts with F-actin. In terms of tissue distribution, expressed in mature pollen.

It is found in the cytoplasm. Its subcellular location is the cytoskeleton. In terms of biological role, cross-links actin filaments (F-actin) in a calcium independent manner. Induces the formation of actin bundles. Stabilizes and prevents F-actin depolymerization mediated by latrunculin B (LatB). The chain is Fimbrin-5 from Arabidopsis thaliana (Mouse-ear cress).